The following is a 164-amino-acid chain: Transcription factor MafF (164 aa).

The interval 51-76 (RLKQRRRTLKNRGYAASCRVKRVCQK) is basic motif. One can recognise a bZIP domain in the interval 51–114 (RLKQRRRTLK…DALRGKCEAL (64 aa)). The segment at 79 to 93 (LQKQKSELEREVDKL) is leucine-zipper. The disordered stretch occupies residues 141–164 (KSTPGSGSGPAHGPDPAHGPASCS). Over residues 149–164 (GPAHGPDPAHGPASCS) the composition is skewed to low complexity.

The protein belongs to the bZIP family. Maf subfamily. Monomer and homo- or heterodimer. Interacts with MIP. Forms high affinity heterodimers with members of the CNC-bZIP family such as NFE2L1/NRF1. As to expression, expressed in the term myometrium and kidney.

It localises to the nucleus. In terms of biological role, since they lack a putative transactivation domain, the small Mafs behave as transcriptional repressors when they dimerize among themselves. However, they seem to serve as transcriptional activators by dimerizing with other (usually larger) basic-zipper proteins, such as NFE2L1/NRF1, and recruiting them to specific DNA-binding sites. Interacts with the upstream promoter region of the oxytocin receptor gene. May be a transcriptional enhancer in the up-regulation of the oxytocin receptor gene at parturition. This Homo sapiens (Human) protein is Transcription factor MafF (MAFF).